Reading from the N-terminus, the 800-residue chain is Kolavenyl diphosphate synthase TPS5, chloroplastic (800 aa).

Residues 1-75 constitute a chloroplast transit peptide; that stretch reads MSLAYSQATS…VILTAEKSVD (75 aa). K244 is a binding site for substrate. The Mg(2+) site is built by D375 and D377. Residues 375-378 carry the DXDD motif motif; it reads DVDD. Residue K461 participates in substrate binding.

It belongs to the terpene synthase family. Mg(2+) serves as cofactor. Mostly expressed in trichomes of leaves and fruits.

Its subcellular location is the plastid. It is found in the chloroplast. It carries out the reaction (2E,6E,10E)-geranylgeranyl diphosphate = (+)-kolavenyl diphosphate. It participates in secondary metabolite biosynthesis; terpenoid biosynthesis. Functionally, involved in the biosynthesis of labdane-type diterpenoid including cleroda-dienols, and peregrinol lactones and furan derivatives, dopaminergic diterpenoids that can bind to dopamine receptors in the human pituitary gland, have probably ability to lower prolactin levels, and are used to treat menstrual cycle disorders (e.g. premenstrual syndrome and mastodynia). Terpene synthase that produces kolavenyl diphosphate from geranylgeranyl diphosphate (GGPP). The polypeptide is Kolavenyl diphosphate synthase TPS5, chloroplastic (Vitex agnus-castus (Chaste tree)).